Reading from the N-terminus, the 373-residue chain is UDP-N-acetylenolpyruvoylglucosamine reductase (373 aa).

One can recognise an FAD-binding PCMH-type domain in the interval 30–203; the sequence is LACTANSVVT…SRVGFRLHTD (174 aa). R180 is an active-site residue. Residue S258 is the Proton donor of the active site. E356 is a catalytic residue.

This sequence belongs to the MurB family. It depends on FAD as a cofactor.

The protein resides in the cytoplasm. The catalysed reaction is UDP-N-acetyl-alpha-D-muramate + NADP(+) = UDP-N-acetyl-3-O-(1-carboxyvinyl)-alpha-D-glucosamine + NADPH + H(+). It participates in cell wall biogenesis; peptidoglycan biosynthesis. Functionally, cell wall formation. The protein is UDP-N-acetylenolpyruvoylglucosamine reductase of Psychrobacter arcticus (strain DSM 17307 / VKM B-2377 / 273-4).